Here is a 349-residue protein sequence, read N- to C-terminus: Isopentenyl-diphosphate delta-isomerase (349 aa).

8-9 contacts substrate; it reads RK. Residues S66, 67–69, S97, and N125 contribute to the FMN site; that span reads SMT. 97–99 contributes to the substrate binding site; sequence STR. Q160 contributes to the substrate binding site. E161 serves as a coordination point for Mg(2+). Residues K192, T222, 272-274, and 293-294 contribute to the FMN site; these read GMK and AR.

The protein belongs to the IPP isomerase type 2 family. As to quaternary structure, homooctamer. Dimer of tetramers. Requires FMN as cofactor. It depends on NADPH as a cofactor. The cofactor is Mg(2+).

Its subcellular location is the cytoplasm. It carries out the reaction isopentenyl diphosphate = dimethylallyl diphosphate. Involved in the biosynthesis of isoprenoids. Catalyzes the 1,3-allylic rearrangement of the homoallylic substrate isopentenyl (IPP) to its allylic isomer, dimethylallyl diphosphate (DMAPP). The polypeptide is Isopentenyl-diphosphate delta-isomerase (Oceanobacillus iheyensis (strain DSM 14371 / CIP 107618 / JCM 11309 / KCTC 3954 / HTE831)).